The following is a 67-amino-acid chain: Small ribosomal subunit protein bS21 (67 aa).

Over residues Glu-37–Arg-52 the composition is skewed to basic and acidic residues. Residues Glu-37–Phe-67 form a disordered region.

The protein belongs to the bacterial ribosomal protein bS21 family.

The chain is Small ribosomal subunit protein bS21 from Gluconacetobacter diazotrophicus (strain ATCC 49037 / DSM 5601 / CCUG 37298 / CIP 103539 / LMG 7603 / PAl5).